The sequence spans 509 residues: UDP-N-acetylmuramyl-tripeptide synthetase (509 aa).

An ATP-binding site is contributed by 124–130; it reads GTNGKTS. UDP-N-acetyl-alpha-D-muramoyl-L-alanyl-D-glutamate is bound by residues 164-165, Ser-191, and Arg-199; that span reads TT. An N6-carboxylysine modification is found at Lys-231.

This sequence belongs to the MurCDEF family. MurE subfamily. In terms of processing, carboxylation is probably crucial for Mg(2+) binding and, consequently, for the gamma-phosphate positioning of ATP.

The protein localises to the cytoplasm. Its pathway is cell wall biogenesis; peptidoglycan biosynthesis. Catalyzes the addition of an amino acid to the nucleotide precursor UDP-N-acetylmuramoyl-L-alanyl-D-glutamate (UMAG) in the biosynthesis of bacterial cell-wall peptidoglycan. The protein is UDP-N-acetylmuramyl-tripeptide synthetase of Tropheryma whipplei (strain TW08/27) (Whipple's bacillus).